Reading from the N-terminus, the 266-residue chain is Small ribosomal subunit protein eS1 (266 aa).

Positions 236 to 266 (GAGTAAKATGDDTGAKVERADGYEPPIQESV) are disordered. Basic and acidic residues predominate over residues 244–257 (TGDDTGAKVERADG).

This sequence belongs to the eukaryotic ribosomal protein eS1 family. In terms of assembly, component of the small ribosomal subunit. Mature ribosomes consist of a small (40S) and a large (60S) subunit. The 40S subunit contains about 33 different proteins and 1 molecule of RNA (18S). The 60S subunit contains about 49 different proteins and 3 molecules of RNA (28S, 5.8S and 5S). Part of the small subunit (SSU) processome, composed of more than 70 proteins and the RNA chaperone small nucleolar RNA (snoRNA) U3.

It localises to the cytoplasm. The protein resides in the nucleus. It is found in the nucleolus. Functionally, component of the small ribosomal subunit. The ribosome is a large ribonucleoprotein complex responsible for the synthesis of proteins in the cell. Part of the small subunit (SSU) processome, first precursor of the small eukaryotic ribosomal subunit. During the assembly of the SSU processome in the nucleolus, many ribosome biogenesis factors, an RNA chaperone and ribosomal proteins associate with the nascent pre-rRNA and work in concert to generate RNA folding, modifications, rearrangements and cleavage as well as targeted degradation of pre-ribosomal RNA by the RNA exosome. May play a role during erythropoiesis. The sequence is that of Small ribosomal subunit protein eS1 (rps3a) from Tetraodon nigroviridis (Spotted green pufferfish).